Consider the following 200-residue polypeptide: Molybdopterin synthase catalytic subunit (200 aa).

Polar residues predominate over residues 16 to 30 (KLPSSHQSVEDSASE). Positions 16–43 (KLPSSHQSVEDSASEPSGYEAKDPPQDT) are disordered. Phosphoserine is present on S20. Substrate-binding positions include 154–155 (HR), K170, and 177–179 (KKE).

This sequence belongs to the MoaE family. MOCS2B subfamily. In terms of assembly, heterotetramer; composed of 2 small (MOCS2A) and 2 large (MOCS2B) subunits.

Its subcellular location is the cytoplasm. The protein localises to the cytosol. The catalysed reaction is 2 [molybdopterin-synthase sulfur-carrier protein]-C-terminal-Gly-aminoethanethioate + cyclic pyranopterin phosphate + H2O = molybdopterin + 2 [molybdopterin-synthase sulfur-carrier protein]-C-terminal Gly-Gly + 2 H(+). It participates in cofactor biosynthesis; molybdopterin biosynthesis. In terms of biological role, catalytic subunit of the molybdopterin synthase complex, a complex that catalyzes the conversion of precursor Z into molybdopterin. Acts by mediating the incorporation of 2 sulfur atoms from thiocarboxylated MOCS2A into precursor Z to generate a dithiolene group. This Rattus norvegicus (Rat) protein is Molybdopterin synthase catalytic subunit.